Consider the following 82-residue polypeptide: UPF0437 protein in nifX-nifW intergenic region (82 aa).

It belongs to the UPF0437 family.

This is UPF0437 protein in nifX-nifW intergenic region from Frankia alni.